Here is a 350-residue protein sequence, read N- to C-terminus: ATPase GET3 (350 aa).

Residue 26–33 coordinates ATP; the sequence is KGGVGKTT. Asp57 is an active-site residue. ATP-binding residues include Glu241 and Asn268. Residues Cys281 and Cys284 each coordinate Zn(2+).

Belongs to the arsA ATPase family. As to quaternary structure, homodimer. Component of the Golgi to ER traffic (GET) complex, which is composed of GET1, GET2 and GET3. Within the complex, GET1 and GET2 form a heterotetramer which is stabilized by phosphatidylinositol binding and which binds to the GET3 homodimer. Interacts with the chloride channel protein GEF1.

The protein localises to the cytoplasm. It is found in the endoplasmic reticulum. Its subcellular location is the golgi apparatus. Functionally, ATPase required for the post-translational delivery of tail-anchored (TA) proteins to the endoplasmic reticulum. Recognizes and selectively binds the transmembrane domain of TA proteins in the cytosol. This complex then targets to the endoplasmic reticulum by membrane-bound receptors GET1 and GET2, where the tail-anchored protein is released for insertion. This process is regulated by ATP binding and hydrolysis. ATP binding drives the homodimer towards the closed dimer state, facilitating recognition of newly synthesized TA membrane proteins. ATP hydrolysis is required for insertion. Subsequently, the homodimer reverts towards the open dimer state, lowering its affinity for the GET1-GET2 receptor, and returning it to the cytosol to initiate a new round of targeting. Cooperates with the HDEL receptor ERD2 to mediate the ATP-dependent retrieval of resident ER proteins that contain a C-terminal H-D-E-L retention signal from the Golgi to the ER. Involved in low-level resistance to the oxyanions arsenite and arsenate, and in heat tolerance. This is ATPase GET3 from Candida glabrata (strain ATCC 2001 / BCRC 20586 / JCM 3761 / NBRC 0622 / NRRL Y-65 / CBS 138) (Yeast).